Here is a 470-residue protein sequence, read N- to C-terminus: MSAAKPTTLYDKIWNDHLVHEAEDGTCLLYIDRHLVHEVTSPQAFEGLRTAGRKVHAPEKTLAVVDHNVPTTDRSKPNPDPESAEQIAALAENARDFGVTYYNEFDKRQGVVHVIGPEQGFTLPGTTIVCGDSHTSTHGAFGALAHGIGTSEVEHVLATQTLIQKKAKNMRVTVDGDLPDGVTAKDIILAIIGEIGTAGGTGYVLEYAGDAIRALSMEGRMTVCNMSIEGGARAGLIAPDEKAYAYLKGRPMAPTGAHWDAAMRYWDTLRSDEGAHFDHELRLDAAALPPIVTWGTSPEDVISVTGKVPNPADIADEAKRLSKERALAYMGLTPGTKITDIKIDRMFIGSCTNGRIEDLRAAAKVAEGKTVNANVNAIIVPGSGLVKEQAEAEGLDKIFVKAGFEWREPGCSMCLAMNPDKLAPEERCASTSNRNFEGRQGFKGRTHLVSPAMAAAAAIAGHFVDIRDWR.

3 residues coordinate [4Fe-4S] cluster: cysteine 351, cysteine 411, and cysteine 414.

This sequence belongs to the aconitase/IPM isomerase family. LeuC type 1 subfamily. As to quaternary structure, heterodimer of LeuC and LeuD. Requires [4Fe-4S] cluster as cofactor.

The enzyme catalyses (2R,3S)-3-isopropylmalate = (2S)-2-isopropylmalate. Its pathway is amino-acid biosynthesis; L-leucine biosynthesis; L-leucine from 3-methyl-2-oxobutanoate: step 2/4. Its function is as follows. Catalyzes the isomerization between 2-isopropylmalate and 3-isopropylmalate, via the formation of 2-isopropylmaleate. In Rhodopseudomonas palustris (strain HaA2), this protein is 3-isopropylmalate dehydratase large subunit.